A 36-amino-acid chain; its full sequence is Neurotoxin PRTx26An0C3 (36 aa).

3 disulfide bridges follow: cysteine 3–cysteine 17, cysteine 10–cysteine 22, and cysteine 16–cysteine 34.

In terms of tissue distribution, expressed by the venom gland.

Its subcellular location is the secreted. Neurotoxin. Causes spastic paralysis and death in mice. Moderate inhibitor of L-type calcium channels (Cav1/CACNA1). The polypeptide is Neurotoxin PRTx26An0C3 (Phoneutria nigriventer (Brazilian armed spider)).